Here is a 67-residue protein sequence, read N- to C-terminus: ATP synthase F(0) complex subunit 8 (67 aa).

The helical transmembrane segment at 8-24 (TWFIMIFSMFLTLFILF) threads the bilayer. N6-acetyllysine; alternate is present on Lys-54. N6-succinyllysine; alternate is present on Lys-54. Lys-57 bears the N6-acetyllysine mark.

It belongs to the ATPase protein 8 family. In terms of assembly, component of the ATP synthase complex composed at least of ATP5F1A/subunit alpha, ATP5F1B/subunit beta, ATP5MC1/subunit c (homooctomer), MT-ATP6/subunit a, MT-ATP8/subunit 8, ATP5ME/subunit e, ATP5MF/subunit f, ATP5MG/subunit g, ATP5MK/subunit k, ATP5MJ/subunit j, ATP5F1C/subunit gamma, ATP5F1D/subunit delta, ATP5F1E/subunit epsilon, ATP5PF/subunit F6, ATP5PB/subunit b, ATP5PD/subunit d, ATP5PO/subunit OSCP. ATP synthase complex consists of a soluble F(1) head domain (subunits alpha(3) and beta(3)) - the catalytic core - and a membrane F(0) domain - the membrane proton channel (subunits c, a, 8, e, f, g, k and j). These two domains are linked by a central stalk (subunits gamma, delta, and epsilon) rotating inside the F1 region and a stationary peripheral stalk (subunits F6, b, d, and OSCP). Interacts with PRICKLE3.

Its subcellular location is the mitochondrion membrane. Subunit 8, of the mitochondrial membrane ATP synthase complex (F(1)F(0) ATP synthase or Complex V) that produces ATP from ADP in the presence of a proton gradient across the membrane which is generated by electron transport complexes of the respiratory chain. ATP synthase complex consist of a soluble F(1) head domain - the catalytic core - and a membrane F(1) domain - the membrane proton channel. These two domains are linked by a central stalk rotating inside the F(1) region and a stationary peripheral stalk. During catalysis, ATP synthesis in the catalytic domain of F(1) is coupled via a rotary mechanism of the central stalk subunits to proton translocation. In vivo, can only synthesize ATP although its ATP hydrolase activity can be activated artificially in vitro. Part of the complex F(0) domain. This Canis lupus familiaris (Dog) protein is ATP synthase F(0) complex subunit 8.